The sequence spans 209 residues: Ribosomal RNA large subunit methyltransferase E (209 aa).

Residues G63, W65, D83, D99, and D124 each coordinate S-adenosyl-L-methionine. K164 (proton acceptor) is an active-site residue.

This sequence belongs to the class I-like SAM-binding methyltransferase superfamily. RNA methyltransferase RlmE family.

Its subcellular location is the cytoplasm. It carries out the reaction uridine(2552) in 23S rRNA + S-adenosyl-L-methionine = 2'-O-methyluridine(2552) in 23S rRNA + S-adenosyl-L-homocysteine + H(+). Specifically methylates the uridine in position 2552 of 23S rRNA at the 2'-O position of the ribose in the fully assembled 50S ribosomal subunit. This is Ribosomal RNA large subunit methyltransferase E from Aliivibrio fischeri (strain MJ11) (Vibrio fischeri).